The following is a 227-amino-acid chain: Zeamatin (227 aa).

The first 20 residues, 1–20 (MAGSVAIVGIFVALLAVAGE), serve as a signal peptide directing secretion. Cystine bridges form between C30–C226, C72–C82, C87–C93, C139–C215, C145–C198, C153–C163, C167–C176, and C177–C185.

This sequence belongs to the thaumatin family.

Has antifungal activity. Inhibits Candida albicans and Trichoderma reesei; marginal inhibition observed against Alternaria solani and Neurospora crassa. The protein is Zeamatin (Zlp) of Zea mays (Maize).